A 133-amino-acid chain; its full sequence is Capsid protein (133 aa).

The protein belongs to the Leviviricetes capsid protein family. In terms of assembly, homodimer. The homodimers binds to the viral RNA via an operator hairpin, but also to many other RNA sequences in the viral genome; this interaction probably shifts the virus from the replicative to the assembly phase and ensures specific encapsidation of the viral genome. Interacts with the maturation protein A2.

The protein resides in the virion. In terms of biological role, capsid protein self-assembles to form an icosahedral capsid with a T=3 symmetry, about 26 nm in diameter, and consisting of 89 capsid proteins dimers (178 capsid proteins). Involved in viral genome encapsidation through the interaction between a capsid protein dimer and the multiple packaging signals present in the RNA genome. Binding of the capsid proteins to the viral RNA induces a conformational change required for efficient T=3 shell formation. The capsid also contains 1 copy of the A2 maturation protein. Acts as a translational repressor of viral replicase synthesis late in infection. This latter function is the result of capsid protein interaction with an RNA hairpin which contains the replicase ribosome-binding site. The sequence is that of Capsid protein from Escherichia virus Qbeta (Bacteriophage Q-beta).